Here is a 688-residue protein sequence, read N- to C-terminus: Polyribonucleotide nucleotidyltransferase (688 aa).

The Mg(2+) site is built by aspartate 484 and aspartate 490. Residues 550-609 (PTTEIFNVAPDKIVEIIGQGGRVIKEIVEKFEVKIDLNKPSGEVKIMGNKERVLKTKEFI) enclose the KH domain. The S1 motif domain maps to 626–688 (DEVLEAQVKR…NKGKIALDLA (63 aa)).

It belongs to the polyribonucleotide nucleotidyltransferase family. Requires Mg(2+) as cofactor.

It is found in the cytoplasm. It catalyses the reaction RNA(n+1) + phosphate = RNA(n) + a ribonucleoside 5'-diphosphate. Functionally, involved in mRNA degradation. Catalyzes the phosphorolysis of single-stranded polyribonucleotides processively in the 3'- to 5'-direction. The chain is Polyribonucleotide nucleotidyltransferase from Helicobacter pylori (strain G27).